A 280-amino-acid polypeptide reads, in one-letter code: UPF0758 protein Atu1607 (280 aa).

The tract at residues 1–22 (MAKRPALPSADLSPTSGFEAGE) is disordered. The MPN domain maps to 158–280 (VLGSWSSVID…HASFKGLRLI (123 aa)). 3 residues coordinate Zn(2+): His229, His231, and Asp242. A JAMM motif motif is present at residues 229 to 242 (HNHPSGDPTPSRAD).

This sequence belongs to the UPF0758 family.

This is UPF0758 protein Atu1607 from Agrobacterium fabrum (strain C58 / ATCC 33970) (Agrobacterium tumefaciens (strain C58)).